An 81-amino-acid polypeptide reads, in one-letter code: Pyruvate synthase subunit PorD (81 aa).

The interval 1-20 (MESLGATVKEPGSTRKNKTG) is disordered. 4Fe-4S ferredoxin-type domains lie at 25–54 (FKPF…KEHE) and 51–80 (KEHE…MERE). [4Fe-4S] cluster contacts are provided by C34, C37, C40, C44, C60, C63, C66, and C70.

In terms of assembly, heterotetramer of one alpha, one beta, one delta and one gamma chain. [4Fe-4S] cluster is required as a cofactor.

The chain is Pyruvate synthase subunit PorD (porD) from Methanothermobacter marburgensis (strain ATCC BAA-927 / DSM 2133 / JCM 14651 / NBRC 100331 / OCM 82 / Marburg) (Methanobacterium thermoautotrophicum).